A 469-amino-acid chain; its full sequence is Aspartyl/glutamyl-tRNA(Asn/Gln) amidotransferase subunit B (469 aa).

Belongs to the GatB/GatE family. GatB subfamily. As to quaternary structure, heterotrimer of A, B and C subunits.

The enzyme catalyses L-glutamyl-tRNA(Gln) + L-glutamine + ATP + H2O = L-glutaminyl-tRNA(Gln) + L-glutamate + ADP + phosphate + H(+). The catalysed reaction is L-aspartyl-tRNA(Asn) + L-glutamine + ATP + H2O = L-asparaginyl-tRNA(Asn) + L-glutamate + ADP + phosphate + 2 H(+). In terms of biological role, allows the formation of correctly charged Asn-tRNA(Asn) or Gln-tRNA(Gln) through the transamidation of misacylated Asp-tRNA(Asn) or Glu-tRNA(Gln) in organisms which lack either or both of asparaginyl-tRNA or glutaminyl-tRNA synthetases. The reaction takes place in the presence of glutamine and ATP through an activated phospho-Asp-tRNA(Asn) or phospho-Glu-tRNA(Gln). The polypeptide is Aspartyl/glutamyl-tRNA(Asn/Gln) amidotransferase subunit B (Thermus thermophilus (strain ATCC BAA-163 / DSM 7039 / HB27)).